The primary structure comprises 467 residues: Chromosomal replication initiator protein DnaA (467 aa).

Residues 1-80 (MTSELWHQCL…APRISLKIGS (80 aa)) are domain I, interacts with DnaA modulators. Residues 80–130 (SITGNSKGQQASKDSAVGATRTTAPSRPVIADVAPSGERNVTVEGAIKHES) are domain II. The interval 131-347 (YLNPTFTFET…GALKLVIANA (217 aa)) is domain III, AAA+ region. The ATP site is built by Gly175, Gly177, Lys178, and Thr179. Residues 348-467 (HFTGQEITPA…YQNFMRMLTS (120 aa)) form a domain IV, binds dsDNA region.

The protein belongs to the DnaA family. In terms of assembly, oligomerizes as a right-handed, spiral filament on DNA at oriC.

It localises to the cytoplasm. Its function is as follows. Plays an essential role in the initiation and regulation of chromosomal replication. ATP-DnaA binds to the origin of replication (oriC) to initiate formation of the DNA replication initiation complex once per cell cycle. Binds the DnaA box (a 9 base pair repeat at the origin) and separates the double-stranded (ds)DNA. Forms a right-handed helical filament on oriC DNA; dsDNA binds to the exterior of the filament while single-stranded (ss)DNA is stabiized in the filament's interior. The ATP-DnaA-oriC complex binds and stabilizes one strand of the AT-rich DNA unwinding element (DUE), permitting loading of DNA polymerase. After initiation quickly degrades to an ADP-DnaA complex that is not apt for DNA replication. Binds acidic phospholipids. This is Chromosomal replication initiator protein DnaA from Hahella chejuensis (strain KCTC 2396).